A 453-amino-acid chain; its full sequence is Tetrahydroanabasine acetyltransferase (453 aa).

Residues His-163 and Asp-388 each act as proton acceptor in the active site.

Belongs to the plant acyltransferase family. As to quaternary structure, monomer.

The enzyme catalyses tetrahydroanabasine + acetyl-CoA = ammodendrine + CoA. It functions in the pathway alkaloid biosynthesis. Its function is as follows. Tetrahydroanabasine acetyltransferase involved in the accumulation of quinolizidine type antinutritional alkaloids (QAs). QAs impart a bitter taste to plants, acting as repellents and toxicants for herbivores and predators, and possess a variety of pharmacological effects, including sedative, anticonvulsant, anti-inflammatory, antiviral, antitumor, antipyretic, anti-hepatitis B, antifibrotic, antiallergic, antidiarrheal, analgesic and antimicrobial activities. Mediates the conversion of tetrahydroanabasine into ammodendrine. The chain is Tetrahydroanabasine acetyltransferase from Lupinus angustifolius (Narrow-leaved blue lupine).